An 85-amino-acid polypeptide reads, in one-letter code: UPF0386 protein Meso_1721 (85 aa).

This sequence belongs to the UPF0386 family.

The protein is UPF0386 protein Meso_1721 of Chelativorans sp. (strain BNC1).